We begin with the raw amino-acid sequence, 594 residues long: Aspartate--tRNA(Asp/Asn) ligase (594 aa).

Glu-175 is a binding site for L-aspartate. The aspartate stretch occupies residues Gln-199–Lys-202. L-aspartate is bound by residues Arg-221 and His-455. ATP is bound at residue Arg-221 to Glu-223. Glu-489 contacts ATP. Arg-496 is a binding site for L-aspartate. Gly-541 to Arg-544 provides a ligand contact to ATP.

The protein belongs to the class-II aminoacyl-tRNA synthetase family. Type 1 subfamily. As to quaternary structure, homodimer.

The protein resides in the cytoplasm. It carries out the reaction tRNA(Asx) + L-aspartate + ATP = L-aspartyl-tRNA(Asx) + AMP + diphosphate. Its function is as follows. Aspartyl-tRNA synthetase with relaxed tRNA specificity since it is able to aspartylate not only its cognate tRNA(Asp) but also tRNA(Asn). Reaction proceeds in two steps: L-aspartate is first activated by ATP to form Asp-AMP and then transferred to the acceptor end of tRNA(Asp/Asn). The chain is Aspartate--tRNA(Asp/Asn) ligase from Pelagibacter ubique (strain HTCC1062).